A 243-amino-acid polypeptide reads, in one-letter code: 1-(5-phosphoribosyl)-5-[(5-phosphoribosylamino)methylideneamino] imidazole-4-carboxamide isomerase (243 aa).

Asp-8 functions as the Proton acceptor in the catalytic mechanism. The active-site Proton donor is Asp-129.

It belongs to the HisA/HisF family.

It is found in the cytoplasm. It catalyses the reaction 1-(5-phospho-beta-D-ribosyl)-5-[(5-phospho-beta-D-ribosylamino)methylideneamino]imidazole-4-carboxamide = 5-[(5-phospho-1-deoxy-D-ribulos-1-ylimino)methylamino]-1-(5-phospho-beta-D-ribosyl)imidazole-4-carboxamide. It participates in amino-acid biosynthesis; L-histidine biosynthesis; L-histidine from 5-phospho-alpha-D-ribose 1-diphosphate: step 4/9. The sequence is that of 1-(5-phosphoribosyl)-5-[(5-phosphoribosylamino)methylideneamino] imidazole-4-carboxamide isomerase from Azorhizobium caulinodans (strain ATCC 43989 / DSM 5975 / JCM 20966 / LMG 6465 / NBRC 14845 / NCIMB 13405 / ORS 571).